The primary structure comprises 112 residues: Macrodomain Ori protein (112 aa).

Positions 91–112 (FHTLSGGKPQVEGAEDYTDSDD) are disordered. Over residues 103-112 (GAEDYTDSDD) the composition is skewed to acidic residues.

Belongs to the MaoP family.

Involved in the organization of the Ori region of the chromosome into a macrodomain (MD). It constrains DNA mobility in the Ori macrodomain and limits long-distance DNA interactions with other chromosomal regions. In Escherichia coli O157:H7, this protein is Macrodomain Ori protein.